The chain runs to 387 residues: Zinc finger protein neuro-d4 (387 aa).

Glycyl lysine isopeptide (Lys-Gly) (interchain with G-Cter in SUMO2) cross-links involve residues K106, K129, and K133. Residues 195-218 (YVCDICGKRYKNRPGLSYHYTHTH) form a C2H2-type zinc finger. 2 consecutive PHD-type zinc fingers follow at residues 271–328 (NGYC…CKSC) and 325–375 (CKSC…CLRH). The Zn(2+) site is built by C274, C277, C293, C296, H301, C304, C322, C325, C328, C331, C343, C346, H351, C354, C369, and C372.

It belongs to the requiem/DPF family. As to quaternary structure, component of neuron-specific chromatin remodeling complex (nBAF complex) composed of at least, ARID1A/BAF250A or ARID1B/BAF250B, SMARCD1/BAF60A, SMARCD3/BAF60C, SMARCA2/BRM/BAF190B, SMARCA4/BRG1/BAF190A, SMARCB1/BAF47, SMARCC1/BAF155, SMARCE1/BAF57, SMARCC2/BAF170, DPF1/BAF45B, DPF3/BAF45C, ACTL6B/BAF53B and actin.

The protein localises to the cytoplasm. Its subcellular location is the nucleus. In terms of biological role, may have an important role in developing neurons by participating in regulation of cell survival, possibly as a neurospecific transcription factor. Belongs to the neuron-specific chromatin remodeling complex (nBAF complex). During neural development a switch from a stem/progenitor to a postmitotic chromatin remodeling mechanism occurs as neurons exit the cell cycle and become committed to their adult state. The transition from proliferating neural stem/progenitor cells to postmitotic neurons requires a switch in subunit composition of the npBAF and nBAF complexes. As neural progenitors exit mitosis and differentiate into neurons, npBAF complexes which contain ACTL6A/BAF53A and PHF10/BAF45A, are exchanged for homologous alternative ACTL6B/BAF53B and DPF1/BAF45B or DPF3/BAF45C subunits in neuron-specific complexes (nBAF). The npBAF complex is essential for the self-renewal/proliferative capacity of the multipotent neural stem cells. The nBAF complex along with CREST plays a role regulating the activity of genes essential for dendrite growth. The polypeptide is Zinc finger protein neuro-d4 (Homo sapiens (Human)).